The following is a 339-amino-acid chain: Heat-inducible transcription repressor HrcA (339 aa).

It belongs to the HrcA family.

Negative regulator of class I heat shock genes (grpE-dnaK-dnaJ and groELS operons). Prevents heat-shock induction of these operons. The sequence is that of Heat-inducible transcription repressor HrcA from Paraburkholderia phytofirmans (strain DSM 17436 / LMG 22146 / PsJN) (Burkholderia phytofirmans).